The primary structure comprises 419 residues: G protein-activated inward rectifier potassium channel 4 (419 aa).

The Cytoplasmic segment spans residues 1 to 86 (MAGDSRNAMN…LFTTLVDLKW (86 aa)). At Ser-5 the chain carries Phosphoserine. A helical membrane pass occupies residues 87–111 (RFNLLVFTMVYTITWLFFGFIWWLI). Topologically, residues 112-135 (AYVRGDLDHVGDQEWIPCVENLSG) are extracellular. The helical; Pore-forming intramembrane region spans 136–147 (FVSAFLFSIETE). The segment at residues 148–154 (TTIGYGF) is an intramembrane region (pore-forming). The Selectivity filter signature appears at 149 to 154 (TIGYGF). The Extracellular segment spans residues 155-163 (RVITEKCPE). The chain crosses the membrane as a helical span at residues 164–185 (GIILLLVQAILGSIVNAFMVGC). Over 186–419 (MFVKISQPKK…SVSQATRGSM (234 aa)) the chain is Cytoplasmic. The interval 388–419 (GCAEAGNEAEAEKDEEGEPNGLSVSQATRGSM) is disordered. Acidic residues predominate over residues 394–405 (NEAEAEKDEEGE). A compositionally biased stretch (polar residues) spans 409–419 (LSVSQATRGSM).

It belongs to the inward rectifier-type potassium channel (TC 1.A.2.1) family. KCNJ5 subfamily. In terms of assembly, associates with KCNJ3/GIRK1 to form a G-protein-activated heteromultimer pore-forming unit. Associates with KCNJ6/GRIK2 to form a G-protein-activated heteromultimer pore-forming unit. As to expression, expressed in the heart.

Its subcellular location is the membrane. The enzyme catalyses K(+)(in) = K(+)(out). Heteromultimer composed of KCNJ3/GIRK1 and KCNJ5/GIRK4 is activated by phosphatidylinositol 4,5 biphosphate (PtdIns(4,5)P2). Its function is as follows. Inward rectifier potassium channels are characterized by a greater tendency to allow potassium to flow into the cell rather than out of it. Their voltage dependence is regulated by the concentration of extracellular potassium; as external potassium is raised, the voltage range of the channel opening shifts to more positive voltages. The inward rectification is mainly due to the blockage of outward current by internal magnesium. Can be blocked by external barium. This potassium channel is controlled by G proteins. Forms a functional channel in association with KCNJ3/GIRK1. The polypeptide is G protein-activated inward rectifier potassium channel 4 (Kcnj5) (Mus musculus (Mouse)).